The following is a 751-amino-acid chain: MIPPASSTPPGEAVIPSVAPQDFWRSPISSYSGSVTGHISHRANNFKRHPKRRKYIRPSPPPPPNTPCPIELVDFGDLHPQRSFWELLFNGCILFGIEFSYAMETAYVTPVLLQMGLPDQLYSLVWFISPILGFLLQPLLGAWSDRCTSRFGRRRPFILVLAIGALLGLSLLLNGRDIGMALADTATNHKWGILLTVCGVVLMDFSADSADNPSHAYMMDVCGPVDQDRGLNIHALMAGLGGGFGYVVGGIHWDKTSFGRALGGQLRVIYVFTAITLSVTTVLTLISIPERPLRPLGEKRTAMKSPSLPLPPSPPVLLEEGAGDALPSTTATSLYASFSSPISPPSPLTPKYGSFISRDSSLTGINEFASSFGTSNIDSVLIDCFTAGHDNYLALPSSVPRQAISVSFPRAPDGFYCQERGLERREGPLTLGSDGDVLRVGSLDTSKPRASGILKRPQTLALPDVAGGNGPETSRRRNVTFSQQVANILLNGVKYESELTGSSEQSEQPLSLRHLCSTIYNMPKALRNLCVNHFLGWLSFEGMLLFYTDFMGEVVFQGDPKAPHTSEAYQKYNSGVTMGCWGMCIYAFSAAFYSAILEKLEECLSVRTLYFIAYLAFGLGTGLATLSRNLYVVLSLCTTYGILFSTLCTLPYSLLCDYYQSKKFAGSSADGTRRGMGVDISLLSCQYFLAQILVSLVLGPLTSAVGSANGVMYFSSLVSFLGCLYSSLCVTYEIPSVDAADEERQPLLLNV.

Transmembrane regions (helical) follow at residues 93–113 (ILFG…PVLL), 123–143 (SLVW…LGAW), 155–175 (RPFI…LLNG), 191–211 (WGIL…DSAD), 233–253 (IHAL…GIHW), and 268–288 (VIYV…LISI). Thr500 carries the post-translational modification Phosphothreonine. The next 6 helical transmembrane spans lie at 536 to 556 (GWLS…EVVF), 576 to 596 (VTMG…YSAI), 606 to 626 (VRTL…LATL), 630 to 650 (LYVV…LCTL), 688 to 708 (FLAQ…VGSA), and 710 to 730 (GVMY…SLCV).

The protein belongs to the glycoside-pentoside-hexuronide (GPH) cation symporter transporter (TC 2.A.2) family.

It is found in the membrane. The enzyme catalyses D-galactose(in) + H(+)(in) = D-galactose(out) + H(+)(out). It carries out the reaction D-glucose(out) + H(+)(out) = D-glucose(in) + H(+)(in). Proton-associated glucose transporter in the brain. The sequence is that of Proton-associated sugar transporter A from Mus musculus (Mouse).